The sequence spans 299 residues: ATP phosphoribosyltransferase (299 aa).

The protein belongs to the ATP phosphoribosyltransferase family. Long subfamily. As to quaternary structure, equilibrium between an active dimeric form, an inactive hexameric form and higher aggregates. Interconversion between the various forms is largely reversible and is influenced by the natural substrates and inhibitors of the enzyme. Requires Mg(2+) as cofactor.

Its subcellular location is the cytoplasm. The catalysed reaction is 1-(5-phospho-beta-D-ribosyl)-ATP + diphosphate = 5-phospho-alpha-D-ribose 1-diphosphate + ATP. It participates in amino-acid biosynthesis; L-histidine biosynthesis; L-histidine from 5-phospho-alpha-D-ribose 1-diphosphate: step 1/9. With respect to regulation, feedback inhibited by histidine. Functionally, catalyzes the condensation of ATP and 5-phosphoribose 1-diphosphate to form N'-(5'-phosphoribosyl)-ATP (PR-ATP). Has a crucial role in the pathway because the rate of histidine biosynthesis seems to be controlled primarily by regulation of HisG enzymatic activity. In Blochmanniella floridana, this protein is ATP phosphoribosyltransferase.